The sequence spans 482 residues: Bifunctional protein GlmU (482 aa).

Positions 1 to 238 (MSAIRPAAVV…HREIAGINNR (238 aa)) are pyrophosphorylase. Residues 12–15 (LAAG), Lys26, Gln79, and 84–85 (GT) each bind UDP-N-acetyl-alpha-D-glucosamine. Asp110 is a binding site for Mg(2+). Residues Gly147, Glu163, Asn178, and Asn236 each contribute to the UDP-N-acetyl-alpha-D-glucosamine site. Asn236 lines the Mg(2+) pocket. The tract at residues 239-259 (VQLAEARRILNDRLLTGAMLA) is linker. An N-acetyltransferase region spans residues 260 to 482 (GVTVVDPATT…AVSREADGED (223 aa)). Positions 341 and 359 each coordinate UDP-N-acetyl-alpha-D-glucosamine. His371 functions as the Proton acceptor in the catalytic mechanism. UDP-N-acetyl-alpha-D-glucosamine contacts are provided by Tyr374 and Asn385. Residues Ala388, 394–395 (NY), Ser413, Ala431, and Arg448 contribute to the acetyl-CoA site. Positions 460–482 (RKRPGSAAAKAAEAVSREADGED) are disordered. Over residues 464-473 (GSAAAKAAEA) the composition is skewed to low complexity.

It in the N-terminal section; belongs to the N-acetylglucosamine-1-phosphate uridyltransferase family. This sequence in the C-terminal section; belongs to the transferase hexapeptide repeat family. In terms of assembly, homotrimer. The cofactor is Mg(2+).

It localises to the cytoplasm. It catalyses the reaction alpha-D-glucosamine 1-phosphate + acetyl-CoA = N-acetyl-alpha-D-glucosamine 1-phosphate + CoA + H(+). The enzyme catalyses N-acetyl-alpha-D-glucosamine 1-phosphate + UTP + H(+) = UDP-N-acetyl-alpha-D-glucosamine + diphosphate. Its pathway is nucleotide-sugar biosynthesis; UDP-N-acetyl-alpha-D-glucosamine biosynthesis; N-acetyl-alpha-D-glucosamine 1-phosphate from alpha-D-glucosamine 6-phosphate (route II): step 2/2. The protein operates within nucleotide-sugar biosynthesis; UDP-N-acetyl-alpha-D-glucosamine biosynthesis; UDP-N-acetyl-alpha-D-glucosamine from N-acetyl-alpha-D-glucosamine 1-phosphate: step 1/1. It functions in the pathway bacterial outer membrane biogenesis; LPS lipid A biosynthesis. Catalyzes the last two sequential reactions in the de novo biosynthetic pathway for UDP-N-acetylglucosamine (UDP-GlcNAc). The C-terminal domain catalyzes the transfer of acetyl group from acetyl coenzyme A to glucosamine-1-phosphate (GlcN-1-P) to produce N-acetylglucosamine-1-phosphate (GlcNAc-1-P), which is converted into UDP-GlcNAc by the transfer of uridine 5-monophosphate (from uridine 5-triphosphate), a reaction catalyzed by the N-terminal domain. The protein is Bifunctional protein GlmU of Streptomyces coelicolor (strain ATCC BAA-471 / A3(2) / M145).